A 240-amino-acid polypeptide reads, in one-letter code: ATP-dependent dethiobiotin synthetase BioD (240 aa).

Residue 15–20 participates in ATP binding; it reads EIGKTF. T19 serves as a coordination point for Mg(2+). K40 is a catalytic residue. ATP-binding positions include D57, 118-121, and 178-179; these read EGVG and NR. Mg(2+) is bound by residues D57 and E118.

This sequence belongs to the dethiobiotin synthetase family. As to quaternary structure, homodimer. It depends on Mg(2+) as a cofactor.

Its subcellular location is the cytoplasm. The enzyme catalyses (7R,8S)-7,8-diammoniononanoate + CO2 + ATP = (4R,5S)-dethiobiotin + ADP + phosphate + 3 H(+). The protein operates within cofactor biosynthesis; biotin biosynthesis; biotin from 7,8-diaminononanoate: step 1/2. Functionally, catalyzes a mechanistically unusual reaction, the ATP-dependent insertion of CO2 between the N7 and N8 nitrogen atoms of 7,8-diaminopelargonic acid (DAPA, also called 7,8-diammoniononanoate) to form a ureido ring. This chain is ATP-dependent dethiobiotin synthetase BioD, found in Burkholderia thailandensis (strain ATCC 700388 / DSM 13276 / CCUG 48851 / CIP 106301 / E264).